The chain runs to 766 residues: 5-methyltetrahydropteroyltriglutamate--homocysteine methyltransferase (766 aa).

5-methyltetrahydropteroyltri-L-glutamate-binding positions include 16–19 (RELK) and K119. L-homocysteine is bound by residues 440–442 (IGS) and E493. L-methionine contacts are provided by residues 440-442 (IGS) and E493. 5-methyltetrahydropteroyltri-L-glutamate-binding positions include 524 to 525 (RC) and W570. D608 contributes to the L-homocysteine binding site. An L-methionine-binding site is contributed by D608. E614 is a 5-methyltetrahydropteroyltri-L-glutamate binding site. The Zn(2+) site is built by H650, C652, and E674. Catalysis depends on H703, which acts as the Proton donor. C735 is a Zn(2+) binding site.

The protein belongs to the vitamin-B12 independent methionine synthase family. It depends on Zn(2+) as a cofactor.

It catalyses the reaction 5-methyltetrahydropteroyltri-L-glutamate + L-homocysteine = tetrahydropteroyltri-L-glutamate + L-methionine. Its pathway is amino-acid biosynthesis; L-methionine biosynthesis via de novo pathway; L-methionine from L-homocysteine (MetE route): step 1/1. In terms of biological role, catalyzes the transfer of a methyl group from 5-methyltetrahydrofolate to homocysteine resulting in methionine formation. The chain is 5-methyltetrahydropteroyltriglutamate--homocysteine methyltransferase from Pseudomonas aeruginosa (strain ATCC 15692 / DSM 22644 / CIP 104116 / JCM 14847 / LMG 12228 / 1C / PRS 101 / PAO1).